The chain runs to 232 residues: 6-phosphogluconolactonase (232 aa).

It belongs to the glucosamine/galactosamine-6-phosphate isomerase family. 6-phosphogluconolactonase subfamily.

It catalyses the reaction 6-phospho-D-glucono-1,5-lactone + H2O = 6-phospho-D-gluconate + H(+). It functions in the pathway carbohydrate degradation; pentose phosphate pathway; D-ribulose 5-phosphate from D-glucose 6-phosphate (oxidative stage): step 2/3. In terms of biological role, hydrolysis of 6-phosphogluconolactone to 6-phosphogluconate. This chain is 6-phosphogluconolactonase (pgl), found in Haemophilus influenzae (strain ATCC 51907 / DSM 11121 / KW20 / Rd).